A 551-amino-acid polypeptide reads, in one-letter code: Oleuropein beta-glucosidase (551 aa).

Over residues 1 to 27 (MDIQSNVLTITSGSTPTDTSSNGQAAK) the composition is skewed to polar residues. A disordered region spans residues 1 to 33 (MDIQSNVLTITSGSTPTDTSSNGQAAKSTKERI). Residues Gln-52, His-156, 201-202 (NE), Tyr-363, Glu-433, Trp-482, 489-490 (EW), and Phe-498 contribute to the a beta-D-glucoside site. Glu-202 acts as the Proton donor in catalysis. Glu-433 acts as the Nucleophile in catalysis. Residues 502–551 (YVDYANGRYTRLPKRSAVWWRNFLTKPTAVPLKNEPEKSEDRRKRLRGST) form a required for the homomultimerization region. The segment at 532 to 551 (PLKNEPEKSEDRRKRLRGST) is disordered. The segment covering 535-544 (NEPEKSEDRR) has biased composition (basic and acidic residues). The Nuclear localization signal motif lies at 542–550 (DRRKRLRGS).

This sequence belongs to the glycosyl hydrolase 1 family. In terms of assembly, homomultimer. Native form of the enzyme requires at least an octamer conformation. As to expression, expressed in expanding leaves and in young drupes, mostly in the developing seed coat tissues, the perisperm and the mesocarp. Also detected in shoot and root meristems, flower buds, developing ovaries and tapetal cells of the anther. Not detected in embryos or endosperm, or in leaf trichomes.

It localises to the nucleus. It catalyses the reaction oleuropein + H2O = oleuropein aglycone + D-glucose. In terms of biological role, major beta-glucosidase activating oleuropein into a potent protein cross-linking agent. No activity with rutin, luteolin or p-nitrophenyl-beta-glucopyranoside as substrates. This Olea europaea (Common olive) protein is Oleuropein beta-glucosidase.